The primary structure comprises 359 residues: Peptide chain release factor 1 (359 aa).

Q234 is modified (N5-methylglutamine). The disordered stretch occupies residues 283-305 (SQKDAARAADRRAQVGSGDRSER).

This sequence belongs to the prokaryotic/mitochondrial release factor family. Post-translationally, methylated by PrmC. Methylation increases the termination efficiency of RF1.

The protein localises to the cytoplasm. Peptide chain release factor 1 directs the termination of translation in response to the peptide chain termination codons UAG and UAA. This is Peptide chain release factor 1 from Methylobacterium sp. (strain 4-46).